Reading from the N-terminus, the 141-residue chain is Vesicle-associated membrane protein 4 (141 aa).

A disordered region spans residues 1–51 (MPPKFKRHLNDDDVTGSVKSERRNLLEDDSDEEEDFFLRGPSGPRFGPRND). Over 1–115 (MPPKFKRHLN…RRQMWWRGCK (115 aa)) the chain is Cytoplasmic. A phosphoserine mark is found at serine 17 and serine 30. Positions 52-112 (KIKHVQNQVD…KQLRRQMWWR (61 aa)) constitute a v-SNARE coiled-coil homology domain. The chain crosses the membrane as a helical; Anchor for type IV membrane protein span at residues 116–136 (IKAIMALVAAILLLVIIILIV). Topologically, residues 137 to 141 (MKYRT) are vesicular.

The protein belongs to the synaptobrevin family. Identified in a complex containing STX6, STX12, VAMP4 and VTI1A. Interacts with BAIAP3; this interaction is increased in the presence of calcium.

It localises to the golgi apparatus. The protein localises to the trans-Golgi network membrane. Its function is as follows. Involved in the pathway that functions to remove an inhibitor (probably synaptotagmin-4) of calcium-triggered exocytosis during the maturation of secretory granules. May be a marker for this sorting pathway that is critical for remodeling the secretory response of granule. This Homo sapiens (Human) protein is Vesicle-associated membrane protein 4 (VAMP4).